The sequence spans 246 residues: Protein SRL3 (246 aa).

Residues 49–61 (SISEAQDSPTSAP) are compositionally biased toward polar residues. 2 disordered regions span residues 49-68 (SISE…GNED) and 200-229 (HAKS…QENS). A Phosphoserine modification is found at serine 212.

Interacts with CLN2. Phosphorylated by CDC28, probably in association with G1 cyclin CLN2.

It is found in the cytoplasm. Weakly suppresses a RAD53 null mutation when overexpressed. The chain is Protein SRL3 (SRL3) from Saccharomyces cerevisiae (strain ATCC 204508 / S288c) (Baker's yeast).